A 368-amino-acid polypeptide reads, in one-letter code: Biglycan (368 aa).

The signal sequence occupies residues 1-16 (MWPLWRLVSLLALSQA). The propeptide occupies 17-37 (LPFEQRGFWDFTLDDGPFMMN). Serine 42 and serine 47 each carry an O-linked (Xyl...) (glycosaminoglycan) serine glycan. 2 cysteine pairs are disulfide-bonded: cysteine 63/cysteine 69 and cysteine 67/cysteine 76. LRR repeat units lie at residues 82-102 (KSVP…NNDI), 103-126 (SELR…NNKI), 127-150 (SKIH…KNHL), 151-171 (VEIP…DNRI), 172-195 (RKVP…GNPL), 196-220 (ENSG…EAKL), 221-241 (TGIP…HNKI), 242-265 (QAIE…HNQI), 266-289 (RMIE…NNKL), 290-312 (ARVP…SNNI), 313-342 (TKVG…NNPV), and 343-368 (PYWE…NYKK). O-linked (Xyl...) (glycosaminoglycan) serine glycosylation is found at serine 180 and serine 198. N-linked (GlcNAc...) asparagine glycosylation is found at asparagine 270 and asparagine 311. Cysteine 321 and cysteine 354 form a disulfide bridge.

This sequence belongs to the small leucine-rich proteoglycan (SLRP) family. SLRP class I subfamily. In terms of assembly, homodimer. Forms a ternary complex with MFAP2 and ELN. In terms of processing, the two attached glycosaminoglycan chains can be either chondroitin sulfate or dermatan sulfate. As to expression, detected in placenta (at protein level). Found in several connective tissues, especially in articular cartilages.

Its subcellular location is the secreted. It localises to the extracellular space. It is found in the extracellular matrix. Its function is as follows. May be involved in collagen fiber assembly. The protein is Biglycan (BGN) of Homo sapiens (Human).